We begin with the raw amino-acid sequence, 105 residues long: Cuticle protein AMP1A (105 aa).

Residues 1-21 are disordered; sequence DRDAQTLTDERSDQGDGNFRY. In terms of domain architecture, Chitin-binding type R&amp;R spans 16–81; sequence DGNFRYEFET…PSSDLLPVGP (66 aa).

As to expression, arthrodial membrane.

This chain is Cuticle protein AMP1A, found in Homarus americanus (American lobster).